A 506-amino-acid polypeptide reads, in one-letter code: Acetaldehyde dehydrogenase 2 (506 aa).

NAD(+) is bound at residue 240 to 245 (GETTTG). Residues Glu262 and Cys301 contribute to the active site.

It belongs to the aldehyde dehydrogenase family.

It carries out the reaction an aldehyde + NAD(+) + H2O = a carboxylate + NADH + 2 H(+). It functions in the pathway alcohol metabolism; ethanol degradation; acetate from ethanol: step 2/2. Its pathway is ketone degradation; acetoin degradation. Involved in the catabolism of acetoin and ethanol. The chain is Acetaldehyde dehydrogenase 2 (acoD) from Cupriavidus necator (strain ATCC 17699 / DSM 428 / KCTC 22496 / NCIMB 10442 / H16 / Stanier 337) (Ralstonia eutropha).